The following is a 457-amino-acid chain: Oxysterol-binding protein-related protein 3C (457 aa).

Disordered regions lie at residues 37-61 (NEGV…KGRW) and 363-393 (QGDL…KGQK). 2 stretches are compositionally biased toward basic and acidic residues: residues 47–61 (GGKE…KGRW) and 370–391 (GSEK…ETKG).

The protein belongs to the OSBP family. In terms of tissue distribution, expressed in roots, leaves, stems and flowers.

In terms of biological role, may be involved in the transport of sterols. This is Oxysterol-binding protein-related protein 3C (ORP3C) from Arabidopsis thaliana (Mouse-ear cress).